A 258-amino-acid polypeptide reads, in one-letter code: D-beta-hydroxybutyrate dehydrogenase (258 aa).

6 to 30 (VITGSTSGIGLAIARTLAKAGANIV) contacts NAD(+). Ser-140 contacts substrate. Residue Tyr-153 is the Proton acceptor of the active site.

The protein belongs to the short-chain dehydrogenases/reductases (SDR) family.

The catalysed reaction is (R)-3-hydroxybutanoate + NAD(+) = acetoacetate + NADH + H(+). This Rhizobium meliloti (strain 1021) (Ensifer meliloti) protein is D-beta-hydroxybutyrate dehydrogenase (bdhA).